A 221-amino-acid chain; its full sequence is Transcription factor bHLH126 (221 aa).

2 disordered regions span residues 1 to 46 and 104 to 132; these read MDPY…KKLL and RRDE…VGKS. The region spanning 42–94 is the bHLH domain; it reads KKKLLHRDIERQRRQEMATLFATLRTHLPLKYIKGKRAVSDHVNGAVNFIKDT.

In terms of assembly, homodimer.

It localises to the nucleus. In Arabidopsis thaliana (Mouse-ear cress), this protein is Transcription factor bHLH126 (BHLH126).